A 524-amino-acid chain; its full sequence is Hydroxysteroid dehydrogenase-like protein 2 (524 aa).

NADP(+) is bound by residues 17–23 (GASRGIG), Lys42, and Asp74. The residue at position 42 (Lys42) is an N6-(2-hydroxyisobutyryl)lysine. Position 116 is an N6-acetyllysine (Lys116). Tyr168 functions as the Proton acceptor in the catalytic mechanism. Lys172 contacts NADP(+). Residues 283-300 (EEKESYDPVPEVKEEKLQ) are compositionally biased toward basic and acidic residues. The tract at residues 283–410 (EEKESYDPVP…PLLQSVLPPK (128 aa)) is disordered. Residues 301-391 (LQEQPQLQEQ…QQQPQQRPQQ (91 aa)) show a composition bias toward low complexity. The 108-residue stretch at 414–521 (GAVEETFRIV…KLEKLMTHMN (108 aa)) folds into the SCP2 domain. Lys424 bears the N6-succinyllysine mark.

It belongs to the short-chain dehydrogenases/reductases (SDR) family.

It is found in the peroxisome. Its subcellular location is the mitochondrion. Functionally, has apparently no steroid dehydrogenase activity. Controls bile acid (BA) and lipid metabolism in response to nutritional cues. This is Hydroxysteroid dehydrogenase-like protein 2 (Hsdl2) from Rattus norvegicus (Rat).